A 159-amino-acid chain; its full sequence is Endoribonuclease YbeY (159 aa).

H125, H129, and H135 together coordinate Zn(2+).

It belongs to the endoribonuclease YbeY family. Zn(2+) is required as a cofactor.

Its subcellular location is the cytoplasm. In terms of biological role, single strand-specific metallo-endoribonuclease involved in late-stage 70S ribosome quality control and in maturation of the 3' terminus of the 16S rRNA. The polypeptide is Endoribonuclease YbeY (Lactiplantibacillus plantarum (strain ATCC BAA-793 / NCIMB 8826 / WCFS1) (Lactobacillus plantarum)).